A 214-amino-acid chain; its full sequence is 3,4-dihydroxy-2-butanone 4-phosphate synthase (214 aa).

Residues 40 to 41 (RE), D45, 153 to 157 (RRGHT), and E177 each bind D-ribulose 5-phosphate. E41 is a binding site for Mg(2+). H156 lines the Mg(2+) pocket.

Belongs to the DHBP synthase family. Homodimer. The cofactor is Mg(2+). It depends on Mn(2+) as a cofactor.

It catalyses the reaction D-ribulose 5-phosphate = (2S)-2-hydroxy-3-oxobutyl phosphate + formate + H(+). It functions in the pathway cofactor biosynthesis; riboflavin biosynthesis; 2-hydroxy-3-oxobutyl phosphate from D-ribulose 5-phosphate: step 1/1. Functionally, catalyzes the conversion of D-ribulose 5-phosphate to formate and 3,4-dihydroxy-2-butanone 4-phosphate. In Rhodospirillum rubrum (strain ATCC 11170 / ATH 1.1.1 / DSM 467 / LMG 4362 / NCIMB 8255 / S1), this protein is 3,4-dihydroxy-2-butanone 4-phosphate synthase.